A 1136-amino-acid chain; its full sequence is Carbamoyl phosphate synthase large chain (1136 aa).

A carboxyphosphate synthetic domain region spans residues 1 to 402; the sequence is MPKRTDIKSV…SLGKAMRSID (402 aa). ATP-binding residues include R129, R169, G175, G176, E208, I210, E215, G241, V242, H243, Q285, and E299. In terms of domain architecture, ATP-grasp 1 spans 133-328; sequence KKVVKEAGAE…IAKIATKLAL (196 aa). Mg(2+) contacts are provided by Q285, E299, and N301. Mn(2+)-binding residues include Q285, E299, and N301. Positions 403–551 are oligomerization domain; the sequence is KRHMGFSWDG…YYYSCYADET (149 aa). Positions 552–962 are carbamoyl phosphate synthetic domain; the sequence is ELRKREREAV…AFAKSQLASY (411 aa). The region spanning 681 to 881 is the ATP-grasp 2 domain; that stretch reads GEVLRQEHLN…LAKAAARIMA (201 aa). Residues R717, K765, L767, E772, G797, V798, H799, S800, Q840, and E852 each coordinate ATP. Mg(2+) contacts are provided by Q840, E852, and N854. Residues Q840, E852, and N854 each contribute to the Mn(2+) site. The allosteric domain stretch occupies residues 963–1136; the sequence is EGGLPTNGNV…KEEGEEARAQ (174 aa). Residues 964-1122 enclose the MGS-like domain; the sequence is GGLPTNGNVF…QEHSRELYEL (159 aa).

It belongs to the CarB family. Composed of two chains; the small (or glutamine) chain promotes the hydrolysis of glutamine to ammonia, which is used by the large (or ammonia) chain to synthesize carbamoyl phosphate. Tetramer of heterodimers (alpha,beta)4. Requires Mg(2+) as cofactor. Mn(2+) serves as cofactor.

It carries out the reaction hydrogencarbonate + L-glutamine + 2 ATP + H2O = carbamoyl phosphate + L-glutamate + 2 ADP + phosphate + 2 H(+). The enzyme catalyses hydrogencarbonate + NH4(+) + 2 ATP = carbamoyl phosphate + 2 ADP + phosphate + 2 H(+). Its pathway is amino-acid biosynthesis; L-arginine biosynthesis; carbamoyl phosphate from bicarbonate: step 1/1. It functions in the pathway pyrimidine metabolism; UMP biosynthesis via de novo pathway; (S)-dihydroorotate from bicarbonate: step 1/3. Its function is as follows. Large subunit of the glutamine-dependent carbamoyl phosphate synthetase (CPSase). CPSase catalyzes the formation of carbamoyl phosphate from the ammonia moiety of glutamine, carbonate, and phosphate donated by ATP, constituting the first step of 2 biosynthetic pathways, one leading to arginine and/or urea and the other to pyrimidine nucleotides. The large subunit (synthetase) binds the substrates ammonia (free or transferred from glutamine from the small subunit), hydrogencarbonate and ATP and carries out an ATP-coupled ligase reaction, activating hydrogencarbonate by forming carboxy phosphate which reacts with ammonia to form carbamoyl phosphate. This is Carbamoyl phosphate synthase large chain from Bifidobacterium animalis subsp. lactis (strain AD011).